A 122-amino-acid polypeptide reads, in one-letter code: Probable glycine cleavage system H protein (122 aa).

In terms of domain architecture, Lipoyl-binding spans 23-104 (IATVGITDYA…PYGNWLVKMK (82 aa)). Lys64 is modified (N6-lipoyllysine).

The protein belongs to the GcvH family. The glycine cleavage system is composed of four proteins: P, T, L and H. (R)-lipoate serves as cofactor.

Its function is as follows. The glycine cleavage system catalyzes the degradation of glycine. The H protein shuttles the methylamine group of glycine from the P protein to the T protein. The polypeptide is Probable glycine cleavage system H protein (Thermoplasma volcanium (strain ATCC 51530 / DSM 4299 / JCM 9571 / NBRC 15438 / GSS1)).